The following is a 255-amino-acid chain: Uracil-DNA glycosylase (255 aa).

A disordered region spans residues 1–20 (MFSASTTPEQPLGLSGDATP). Asp-99 (proton acceptor) is an active-site residue.

Belongs to the uracil-DNA glycosylase (UDG) superfamily. UNG family.

It localises to the host nucleus. The catalysed reaction is Hydrolyzes single-stranded DNA or mismatched double-stranded DNA and polynucleotides, releasing free uracil.. Excises uracil residues from the DNA which can arise as a result of misincorporation of dUMP residues by DNA polymerase or deamination of cytosines. Therefore may reduce deleterious uracil incorporation into the viral genome, particularly in terminally differentiated cells which lack DNA repair enzymes. The protein is Uracil-DNA glycosylase of Human herpesvirus 2 (strain HG52) (HHV-2).